We begin with the raw amino-acid sequence, 449 residues long: Signal recognition particle protein (449 aa).

Residues 109 to 116, 191 to 195, and 249 to 252 contribute to the GTP site; these read GLQGSGKT, DTAGR, and SRID.

Belongs to the GTP-binding SRP family. SRP54 subfamily. Part of the signal recognition particle protein translocation system, which is composed of SRP and FtsY. SRP is a ribonucleoprotein composed of Ffh and a 4.5S RNA molecule.

The protein resides in the cytoplasm. The catalysed reaction is GTP + H2O = GDP + phosphate + H(+). Involved in targeting and insertion of nascent membrane proteins into the cytoplasmic membrane. Binds to the hydrophobic signal sequence of the ribosome-nascent chain (RNC) as it emerges from the ribosomes. The SRP-RNC complex is then targeted to the cytoplasmic membrane where it interacts with the SRP receptor FtsY. Interaction with FtsY leads to the transfer of the RNC complex to the Sec translocase for insertion into the membrane, the hydrolysis of GTP by both Ffh and FtsY, and the dissociation of the SRP-FtsY complex into the individual components. The sequence is that of Signal recognition particle protein from Rickettsia conorii (strain ATCC VR-613 / Malish 7).